The chain runs to 237 residues: Cysteine-rich venom protein ENH2 (237 aa).

Positions 1-18 (MIVFILLSLAAVLQQFVA) are cleaved as a signal peptide. Positions 37–165 (VDMHNSFRRS…PYNYFYVCQY (129 aa)) constitute an SCP domain. Disulfide bonds link Cys-74–Cys-152, Cys-91–Cys-166, Cys-147–Cys-163, Cys-185–Cys-192, Cys-188–Cys-197, Cys-210–Cys-228, and Cys-219–Cys-232. A ShKT domain is found at 201-237 (CPITNTFTNCDSLLQQNSCEDSYIKTNCGASCFGQDK).

Belongs to the CRISP family. As to expression, expressed by the venom gland.

The protein localises to the secreted. Functionally, blocks contraction of smooth muscle elicited by high potassium-induced depolarization, but does not block caffeine-stimulated contraction. May target voltage-gated calcium channels on smooth muscle. This chain is Cysteine-rich venom protein ENH2, found in Pseudoferania polylepis (Macleay's water snake).